The chain runs to 192 residues: uncharacterized protein (192 aa).

Positions 29–160 constitute a Nudix hydrolase domain; that stretch reads HRQAAVLIPI…PLDIYRRGDS (132 aa). The short motif at 67–89 is the Nudix box element; the sequence is GAVDDTDASVIAAALREAEEEVA. Mg(2+) is bound by residues Glu83 and Glu87.

Belongs to the Nudix hydrolase family. PCD1 subfamily. It depends on Mn(2+) as a cofactor. Requires Mg(2+) as cofactor.

Functionally, probably mediates the hydrolysis of some nucleoside diphosphate derivatives. This is an uncharacterized protein from Shigella sonnei (strain Ss046).